The chain runs to 274 residues: Large ribosomal subunit protein uL2 (274 aa).

The interval 214 to 274 is disordered; it reads LGRRPRTRPV…NKYIVERRKK (61 aa).

This sequence belongs to the universal ribosomal protein uL2 family. In terms of assembly, part of the 50S ribosomal subunit. Forms a bridge to the 30S subunit in the 70S ribosome.

One of the primary rRNA binding proteins. Required for association of the 30S and 50S subunits to form the 70S ribosome, for tRNA binding and peptide bond formation. It has been suggested to have peptidyltransferase activity; this is somewhat controversial. Makes several contacts with the 16S rRNA in the 70S ribosome. The protein is Large ribosomal subunit protein uL2 of Flavobacterium johnsoniae (strain ATCC 17061 / DSM 2064 / JCM 8514 / BCRC 14874 / CCUG 350202 / NBRC 14942 / NCIMB 11054 / UW101) (Cytophaga johnsonae).